The primary structure comprises 453 residues: UPF0210 protein Mbur_0828 (453 aa).

Belongs to the UPF0210 family.

The protein is UPF0210 protein Mbur_0828 of Methanococcoides burtonii (strain DSM 6242 / NBRC 107633 / OCM 468 / ACE-M).